Reading from the N-terminus, the 254-residue chain is Indole-3-glycerol phosphate synthase (254 aa).

It belongs to the TrpC family.

The enzyme catalyses 1-(2-carboxyphenylamino)-1-deoxy-D-ribulose 5-phosphate + H(+) = (1S,2R)-1-C-(indol-3-yl)glycerol 3-phosphate + CO2 + H2O. Its pathway is amino-acid biosynthesis; L-tryptophan biosynthesis; L-tryptophan from chorismate: step 4/5. The chain is Indole-3-glycerol phosphate synthase from Methanopyrus kandleri (strain AV19 / DSM 6324 / JCM 9639 / NBRC 100938).